Reading from the N-terminus, the 129-residue chain is uncharacterized protein (129 aa).

This is an uncharacterized protein from Methanocaldococcus jannaschii (strain ATCC 43067 / DSM 2661 / JAL-1 / JCM 10045 / NBRC 100440) (Methanococcus jannaschii).